Consider the following 640-residue polypeptide: 1,4-alpha-glucan branching enzyme GlgB (640 aa).

Asp-318 functions as the Nucleophile in the catalytic mechanism. The Proton donor role is filled by Glu-371.

The protein belongs to the glycosyl hydrolase 13 family. GlgB subfamily. In terms of assembly, monomer.

It catalyses the reaction Transfers a segment of a (1-&gt;4)-alpha-D-glucan chain to a primary hydroxy group in a similar glucan chain.. The protein operates within glycan biosynthesis; glycogen biosynthesis. Its function is as follows. Catalyzes the formation of the alpha-1,6-glucosidic linkages in glycogen by scission of a 1,4-alpha-linked oligosaccharide from growing alpha-1,4-glucan chains and the subsequent attachment of the oligosaccharide to the alpha-1,6 position. This Francisella tularensis subsp. holarctica (strain LVS) protein is 1,4-alpha-glucan branching enzyme GlgB.